Reading from the N-terminus, the 167-residue chain is uncharacterized protein (167 aa).

2 consecutive transmembrane segments (helical) span residues 21-41 (KIGL…IYKP) and 87-107 (MIIT…YVFG). Residues 136 to 159 (RKQRLKEQREKKEQKKEQKKEKKT) are compositionally biased toward basic and acidic residues. Positions 136-167 (RKQRLKEQREKKEQKKEQKKEKKTERRKKKKL) are disordered.

The protein resides in the membrane. This is an uncharacterized protein from Schizosaccharomyces pombe (strain 972 / ATCC 24843) (Fission yeast).